A 188-amino-acid chain; its full sequence is Ribosome maturation factor RimM (188 aa).

The PRC barrel domain maps to 96 to 169 (DDEFYYADLE…TLLIDPLAAG (74 aa)).

It belongs to the RimM family. Binds ribosomal protein uS19.

The protein resides in the cytoplasm. Its function is as follows. An accessory protein needed during the final step in the assembly of 30S ribosomal subunit, possibly for assembly of the head region. Essential for efficient processing of 16S rRNA. May be needed both before and after RbfA during the maturation of 16S rRNA. It has affinity for free ribosomal 30S subunits but not for 70S ribosomes. This Rhizobium etli (strain ATCC 51251 / DSM 11541 / JCM 21823 / NBRC 15573 / CFN 42) protein is Ribosome maturation factor RimM.